The following is a 163-amino-acid chain: Phosphopantetheine adenylyltransferase (163 aa).

A substrate-binding site is contributed by T11. ATP is bound by residues 11 to 12 and H19; that span reads TF. K43, L75, and R89 together coordinate substrate. ATP-binding positions include 90-92, E100, and 125-131; these read GLR and YSFISST.

It belongs to the bacterial CoaD family. As to quaternary structure, homohexamer. Mg(2+) serves as cofactor.

It localises to the cytoplasm. The catalysed reaction is (R)-4'-phosphopantetheine + ATP + H(+) = 3'-dephospho-CoA + diphosphate. The protein operates within cofactor biosynthesis; coenzyme A biosynthesis; CoA from (R)-pantothenate: step 4/5. Functionally, reversibly transfers an adenylyl group from ATP to 4'-phosphopantetheine, yielding dephospho-CoA (dPCoA) and pyrophosphate. The sequence is that of Phosphopantetheine adenylyltransferase from Acinetobacter baumannii (strain SDF).